Reading from the N-terminus, the 651-residue chain is DNA topoisomerase 3 (651 aa).

Residues 1-134 enclose the Toprim domain; the sequence is MRLFIAEKPS…KRDKILRCLI (134 aa). 3 residues coordinate Mg(2+): Glu7, Asp103, and Asp105. In terms of domain architecture, Topo IA-type catalytic spans 155 to 612; sequence FIPLATSALA…NLNQILPDLV (458 aa). The segment at 194-199 is interaction with DNA; the sequence is SVGRVQ. Tyr337 acts as the O-(5'-phospho-DNA)-tyrosine intermediate in catalysis. Residues 631–651 form a disordered region; the sequence is SDRAKPKSAVKKSSKSNGETD.

Belongs to the type IA topoisomerase family. Requires Mg(2+) as cofactor.

The enzyme catalyses ATP-independent breakage of single-stranded DNA, followed by passage and rejoining.. Functionally, releases the supercoiling and torsional tension of DNA, which is introduced during the DNA replication and transcription, by transiently cleaving and rejoining one strand of the DNA duplex. Introduces a single-strand break via transesterification at a target site in duplex DNA. The scissile phosphodiester is attacked by the catalytic tyrosine of the enzyme, resulting in the formation of a DNA-(5'-phosphotyrosyl)-enzyme intermediate and the expulsion of a 3'-OH DNA strand. The free DNA strand then undergoes passage around the unbroken strand, thus removing DNA supercoils. Finally, in the religation step, the DNA 3'-OH attacks the covalent intermediate to expel the active-site tyrosine and restore the DNA phosphodiester backbone. In Haemophilus influenzae (strain ATCC 51907 / DSM 11121 / KW20 / Rd), this protein is DNA topoisomerase 3.